The primary structure comprises 415 residues: MPPLYRRSCITCVQSKRKCDQGLPKCQRCLAKNIHCEYNPRYPNRRRQTTERNVDENVSLVEPIAEEPSRGCQLQRSPARPTSPTHSPHANDIFFNFANDPFNLESIPQDNFLNSTIFEDVVTQQAPNDTERITSDTTAQARVEFAAKKLSVIPKIFSQQGQTMFIHRQLFQDRAPPALQDALSACALYCLKSTENQTLVFRNLEHKRKQLISSIDPLLASKLDLLEALQALVLYQIISLFDGDIRLRAQAEADEPVLLMWAAQLTLRTPQFQPPLGLSNPQSLAGSASMDWGRWLIEESSRRTLITASMLKGVYSFVKLGYDTVPDMRMSFTAQAVLWNSQSEISWRRAYKEKERLEIQVTHWDETIAKAKANDLEELGVLIMVMLKGTGATGEWLGHSQNIRYGLEEAYYGSV.

A DNA-binding region (zn(2)-C6 fungal-type) is located at residues 9 to 36; the sequence is CITCVQSKRKCDQGLPKCQRCLAKNIHC. The tract at residues 65–91 is disordered; that stretch reads AEEPSRGCQLQRSPARPTSPTHSPHAN. Residues 72 to 88 show a composition bias toward polar residues; the sequence is CQLQRSPARPTSPTHSP.

It localises to the nucleus. Functionally, transcription factor that regulates expression of the gene cluster that mediates the biosynthesis of Griseofulvin, an important antifungal drug that has been in use for a long time for treating dermatophyte infections. In Penicillium aethiopicum, this protein is Transcription factor gsfR2.